A 445-amino-acid chain; its full sequence is MSEMTLNAAEQPIDELVGWVKQHDFSLNLTTERLAFLIAIAVLSNERFDEELGEGELHDAFAIVTRLFDETGEASAFRANNAINEMVKQRLISRFVSEITDGASIYRLSPLAIGITDYYVRHREFSKLRLSIQLSMVADEMAKAIEAAQKGGTPGHWKKNVYGILKYSVGEIFDQIDLNQRVMDEQQQSVKQQIADLLNKDWREAINNCEALLSETSSTLRELQDTLQAASDELQTQILDIQEIVYGDPELEFIEEALFGLQMKLDRITSWGQQAIDLWIGYDRHVHKFIRTAIDMDKNRAFSSRLRQSVKDYFDSPWYLTYADAERLSDLRDEALVLRDDEVTGQVPMEVEYEEFQQVNDELAERIGDMLKAHKDQGAPIDLSVVLRDYLAQHPHTHHFDLARIVVDQAVRLGYSESDYQAVQPDWKAINEFGAKVQANVIDRY.

Residues Leu213 to Ile241 are leucine-zipper.

It belongs to the MukF family. As to quaternary structure, interacts, and probably forms a ternary complex, with MukE and MukB via its C-terminal region. The complex formation is stimulated by calcium or magnesium. It is required for an interaction between MukE and MukB.

The protein localises to the cytoplasm. The protein resides in the nucleoid. Its function is as follows. Involved in chromosome condensation, segregation and cell cycle progression. May participate in facilitating chromosome segregation by condensation DNA from both sides of a centrally located replisome during cell division. Not required for mini-F plasmid partitioning. Probably acts via its interaction with MukB and MukE. Overexpression results in anucleate cells. It has a calcium binding activity. The polypeptide is Chromosome partition protein MukF (Vibrio campbellii (strain ATCC BAA-1116)).